The following is a 471-amino-acid chain: Glutamate--tRNA ligase 1 (471 aa).

The 'HIGH' region signature appears at 15 to 25 (PSPTGYLHIGG). Residues 243–247 (KLSKR) carry the 'KMSKS' region motif. Residue K246 participates in ATP binding.

The protein belongs to the class-I aminoacyl-tRNA synthetase family. Glutamate--tRNA ligase type 1 subfamily. In terms of assembly, monomer.

The protein localises to the cytoplasm. It catalyses the reaction tRNA(Glu) + L-glutamate + ATP = L-glutamyl-tRNA(Glu) + AMP + diphosphate. Its function is as follows. Catalyzes the attachment of glutamate to tRNA(Glu) in a two-step reaction: glutamate is first activated by ATP to form Glu-AMP and then transferred to the acceptor end of tRNA(Glu). This Cereibacter sphaeroides (strain ATCC 17029 / ATH 2.4.9) (Rhodobacter sphaeroides) protein is Glutamate--tRNA ligase 1.